The sequence spans 123 residues: Small ribosomal subunit protein uS12 (123 aa).

Asp-89 carries the 3-methylthioaspartic acid modification.

This sequence belongs to the universal ribosomal protein uS12 family. As to quaternary structure, part of the 30S ribosomal subunit. Contacts proteins S8 and S17. May interact with IF1 in the 30S initiation complex.

In terms of biological role, with S4 and S5 plays an important role in translational accuracy. Functionally, interacts with and stabilizes bases of the 16S rRNA that are involved in tRNA selection in the A site and with the mRNA backbone. Located at the interface of the 30S and 50S subunits, it traverses the body of the 30S subunit contacting proteins on the other side and probably holding the rRNA structure together. The combined cluster of proteins S8, S12 and S17 appears to hold together the shoulder and platform of the 30S subunit. This is Small ribosomal subunit protein uS12 from Rhizobium etli (strain ATCC 51251 / DSM 11541 / JCM 21823 / NBRC 15573 / CFN 42).